The sequence spans 33 residues: Kappa-sparatoxin-Hv1a (33 aa).

Disulfide bonds link C2–C17, C9–C22, and C16–C27. At W33 the chain carries Tryptophan amide.

In terms of tissue distribution, expressed by the venom gland.

The protein resides in the secreted. Blocks transient outward voltage-gated potassium channels in rat ventricular myocytes (thus prolonging action-potential duration) and rat Kv4.2/KCNA4 channels expressed in Xenopus oocytes. Is also a weak blocker of calcium channels in rat cerebellar granule cells. The sequence is that of Kappa-sparatoxin-Hv1a from Heteropoda venatoria (Brown huntsman spider).